An 822-amino-acid polypeptide reads, in one-letter code: A disintegrin and metallopeptidase domain 3 (822 aa).

Residues M1–A16 form the signal peptide. The region spanning R187–S384 is the Peptidase M12B domain. Disulfide bonds link C296–C379, C338–C363, C340–C345, C456–C476, C623–C635, C629–C641, and C643–C652. Residues G395 to D484 enclose the Disintegrin domain. The region spanning G619–D653 is the EGF-like domain. Residues V689 to V709 traverse the membrane as a helical segment.

Interacts with LY6K. Interacts with TEX101. Initially synthesized as a 110-kDa precursor in round spermatids, and the precursor is then processed into a 42-kDa mature protein during the sperm transport into and/or once in the epididymis. As to expression, expressed in sperm (at protein level).

The protein resides in the cell membrane. Its function is as follows. Involved in fertilization by controlling sperm migration into the oviduct. Promotes the binding of sperm to the oocyte zona pellucida. This Mus musculus (Mouse) protein is A disintegrin and metallopeptidase domain 3.